Here is a 401-residue protein sequence, read N- to C-terminus: Exodeoxyribonuclease 7 large subunit (401 aa).

Belongs to the XseA family. In terms of assembly, heterooligomer composed of large and small subunits.

It is found in the cytoplasm. The catalysed reaction is Exonucleolytic cleavage in either 5'- to 3'- or 3'- to 5'-direction to yield nucleoside 5'-phosphates.. Its function is as follows. Bidirectionally degrades single-stranded DNA into large acid-insoluble oligonucleotides, which are then degraded further into small acid-soluble oligonucleotides. The chain is Exodeoxyribonuclease 7 large subunit from Lachnoclostridium phytofermentans (strain ATCC 700394 / DSM 18823 / ISDg) (Clostridium phytofermentans).